The chain runs to 465 residues: MKHIVKHIHFVGIGGAGMSGIAEVLVNLGYEVSGSDLSRNAVTDRLQALGARIAIGHDAVNIEGANAVVVSTAVRSDNPEVLAARAKRVPIVQRAVMLAELMRLKQGIAIAGTHGKTTTTSLVASVLAAGGLDPTFVIGGRLISAGANARLGTGDFIVAEADESDASFLNLYPVIEVITNIDADHMDTYGHDFARLKQAFIEFTQRLPFYGSAVVCVDDPNVRQIIPFISKPVVRYGLSPDAQVRAEDIDARDGRMHFTVIRDGRAPLAVVLNMPGLHNVQNALAAIAIATDLGVSDDAIQLALAEFNGVGRRFQRYGEVPAADGGQYTLIDDYGHHPVEMAATIAAARGAFPGRRLVLAFQPHRYTRTRDCFDDFVNVLSTVDALVLTEVYAAGEAAISTANGDALSRALRTVGKVDPVFVATVDDVPDALAKVAQNGDVVITMGAGSIGGVPAKVAQHTQQKA.

112–118 (GTHGKTT) serves as a coordination point for ATP.

Belongs to the MurCDEF family.

The protein localises to the cytoplasm. It carries out the reaction UDP-N-acetyl-alpha-D-muramate + L-alanine + ATP = UDP-N-acetyl-alpha-D-muramoyl-L-alanine + ADP + phosphate + H(+). The protein operates within cell wall biogenesis; peptidoglycan biosynthesis. Functionally, cell wall formation. The polypeptide is UDP-N-acetylmuramate--L-alanine ligase (Burkholderia lata (strain ATCC 17760 / DSM 23089 / LMG 22485 / NCIMB 9086 / R18194 / 383)).